We begin with the raw amino-acid sequence, 486 residues long: MFLNRGKSKKNLGAIALAGMVISSMIGGGIFSLPQNMAASAGAGAIILAWLLTGIGMFFIANTFKILSLVRPDLTTGIYMYSREGFGPYVGFTIGWGYWLCQIFGNVGYAVMTMDALNYFFPPYFKGGNTIPAIIGGSILIWVFNFIVLKGIRQASFINIIGTVCKLVPLIVFIIITAFAFKLAIFKTDFWGDAVTKTQPALGSVTSQLKSTMLVTLWAFIGIEGAVVMSARAKSPSAVGKATLLGFVGCLTVYILLSILPFGSLFQYQLAGIPNPSTAGVLGMLVGRWGEILMNVGLLIAILSSWLSWTIIVAEIPYTAATNGTFPEIFAIENAQHSPKLSLYITSALMQITMLFVYFSTNAWNTMLSITGVMVLPAYLASAAFLFQFSKNKKYPNKGPVKSYIAKYTGFFAVIYSLWLIYAGGLNYLLMSVILLALGIPFYIDAGKKSKREKTFFAKKEVTKIIIIALLALLAIFLFSTEKIRL.

A run of 12 helical transmembrane segments spans residues 12–32, 41–61, 85–105, 129–149, 160–180, 211–231, 242–262, 296–316, 341–361, 367–387, 418–438, and 461–481; these read LGAI…GIFS, AGAG…FFIA, GFGP…QIFG, NTIP…FIVL, IIGT…TAFA, STML…VMSA, ATLL…ILPF, VGLL…VAEI, LSLY…YFST, MLSI…AFLF, LWLI…LLAL, and EVTK…LFST.

This sequence belongs to the amino acid-polyamine-organocation (APC) superfamily. Basic amino acid/polyamine antiporter (APA) (TC 2.A.3.2) family.

The protein resides in the cell inner membrane. Catalyzes the exchange of L-arginine for agmatine. The arginine uptake by the bacterium in the macrophage may be a virulence factor against the host innate immune response. In Chlamydia caviae (strain ATCC VR-813 / DSM 19441 / 03DC25 / GPIC) (Chlamydophila caviae), this protein is Arginine/agmatine antiporter (aaxC).